The chain runs to 704 residues: Plasma membrane ATPase 2 (704 aa).

The helical transmembrane segment at 1-16 (CSIAVGMIIEIIVMYP) threads the bilayer. Residues 17–26 (IQHRKYRPGI) lie on the Extracellular side of the membrane. The chain crosses the membrane as a helical span at residues 27 to 48 (DNLLVLLIGGIPIAMPTVLSVT). Residues 49-395 (MAIGSHRLAQ…TSRAIFQRMK (347 aa)) lie on the Cytoplasmic side of the membrane. Asp81 serves as the catalytic 4-aspartylphosphate intermediate. Positions 340 and 344 each coordinate Mg(2+). A helical transmembrane segment spans residues 396-417 (NYTIYAVSITIRIVLGFMLLAL). The Extracellular segment spans residues 418–422 (IWKFD). A helical transmembrane segment spans residues 423–445 (FPPFMVLIIAILNDGTIMTISKD). Residues 446–461 (RVKPSPLPDSWKLAEI) lie on the Cytoplasmic side of the membrane. Residues 462 to 482 (FTTGVVLGGYLAMMTVIFFWA) form a helical membrane-spanning segment. Over 483–507 (AYETQFFPRVFGVSTLQRTATDDFR) the chain is Extracellular. Residues 508–528 (KLASAIYLQVSTISQALIFVT) traverse the membrane as a helical segment. The Cytoplasmic portion of the chain corresponds to 529 to 540 (RSRSWSFVERPG). A helical membrane pass occupies residues 541–561 (LLLVVALIVAQLVATLIAVYA). Topologically, residues 562–570 (SWSFAAIEG) are extracellular. The helical transmembrane segment at 571 to 591 (IGWGWAGVIWLYNLVFYFPLD) threads the bilayer. Topologically, residues 592 to 704 (IIKFLIRYAL…IETIQQSYTV (113 aa)) are cytoplasmic.

Belongs to the cation transport ATPase (P-type) (TC 3.A.3) family. Type IIIA subfamily. Possibly exists as a homodimer or a homotrimer.

It is found in the cell membrane. It catalyses the reaction ATP + H2O + H(+)(in) = ADP + phosphate + 2 H(+)(out). Its function is as follows. The plasma membrane ATPase of plants and fungi is a hydrogen ion pump. The proton gradient it generates drives the active transport of nutrients by H(+)-symport. The resulting external acidification and/or internal alkinization may mediate growth responses. This chain is Plasma membrane ATPase 2 (LHA2), found in Solanum lycopersicum (Tomato).